Consider the following 146-residue polypeptide: Hemoglobin subunit beta (146 aa).

Valine 1 carries the N-acetylvaline modification. The Globin domain maps to 2 to 146 (HLTPEEKNAV…VANALAHKYH (145 aa)). Threonine 12 carries the post-translational modification Phosphothreonine. Serine 44 is subject to Phosphoserine. Residue lysine 59 is modified to N6-acetyllysine. Histidine 63 contacts heme b. Lysine 82 carries the post-translational modification N6-acetyllysine. Histidine 92 contacts heme b. Cysteine 93 bears the S-nitrosocysteine mark. An N6-acetyllysine modification is found at lysine 144.

Belongs to the globin family. In terms of assembly, heterotetramer of two alpha chains and two beta chains. Red blood cells.

Involved in oxygen transport from the lung to the various peripheral tissues. The polypeptide is Hemoglobin subunit beta (HBB) (Macaca mulatta (Rhesus macaque)).